The chain runs to 179 residues: Protein GrpE (179 aa).

Residues Met1–Val23 are disordered.

It belongs to the GrpE family. As to quaternary structure, homodimer.

The protein resides in the cytoplasm. Functionally, participates actively in the response to hyperosmotic and heat shock by preventing the aggregation of stress-denatured proteins, in association with DnaK and GrpE. It is the nucleotide exchange factor for DnaK and may function as a thermosensor. Unfolded proteins bind initially to DnaJ; upon interaction with the DnaJ-bound protein, DnaK hydrolyzes its bound ATP, resulting in the formation of a stable complex. GrpE releases ADP from DnaK; ATP binding to DnaK triggers the release of the substrate protein, thus completing the reaction cycle. Several rounds of ATP-dependent interactions between DnaJ, DnaK and GrpE are required for fully efficient folding. The polypeptide is Protein GrpE (Campylobacter curvus (strain 525.92)).